The primary structure comprises 362 residues: NAD(P)H-quinone oxidoreductase subunit 1, chloroplastic (362 aa).

A run of 8 helical transmembrane segments spans residues 29–49 (ILPILTLLLGITIEVLVIVWL), 103–123 (IAVISVLLSFLVIPLGYHFVL), 128–148 (IGVFLWIAISSIAPIGLLMAG), 164–184 (AAQSISYEIPLTFCVLAISLL), 202–222 (FFGWNIWRQPIGFLVFLISSL), 247–267 (YSGIKYGLFYLVSYLNLLVSS), 303–323 (TMGIFITLTKAYLFLFISITI), and 342–362 (FLLPISLGNLLLTTSFQLVSL).

It belongs to the complex I subunit 1 family. NDH is composed of at least 16 different subunits, 5 of which are encoded in the nucleus.

It localises to the plastid. It is found in the chloroplast thylakoid membrane. It catalyses the reaction a plastoquinone + NADH + (n+1) H(+)(in) = a plastoquinol + NAD(+) + n H(+)(out). It carries out the reaction a plastoquinone + NADPH + (n+1) H(+)(in) = a plastoquinol + NADP(+) + n H(+)(out). Its function is as follows. NDH shuttles electrons from NAD(P)H:plastoquinone, via FMN and iron-sulfur (Fe-S) centers, to quinones in the photosynthetic chain and possibly in a chloroplast respiratory chain. The immediate electron acceptor for the enzyme in this species is believed to be plastoquinone. Couples the redox reaction to proton translocation, and thus conserves the redox energy in a proton gradient. This chain is NAD(P)H-quinone oxidoreductase subunit 1, chloroplastic, found in Hordeum vulgare (Barley).